Here is a 304-residue protein sequence, read N- to C-terminus: Aspartate carbamoyltransferase catalytic subunit (304 aa).

Arg-49 and Thr-50 together coordinate carbamoyl phosphate. Lys-77 provides a ligand contact to L-aspartate. Positions 99, 127, and 130 each coordinate carbamoyl phosphate. Residues Arg-160 and Arg-211 each contribute to the L-aspartate site. Positions 252 and 253 each coordinate carbamoyl phosphate.

This sequence belongs to the aspartate/ornithine carbamoyltransferase superfamily. ATCase family. In terms of assembly, heterododecamer (2C3:3R2) of six catalytic PyrB chains organized as two trimers (C3), and six regulatory PyrI chains organized as three dimers (R2).

The catalysed reaction is carbamoyl phosphate + L-aspartate = N-carbamoyl-L-aspartate + phosphate + H(+). It functions in the pathway pyrimidine metabolism; UMP biosynthesis via de novo pathway; (S)-dihydroorotate from bicarbonate: step 2/3. Catalyzes the condensation of carbamoyl phosphate and aspartate to form carbamoyl aspartate and inorganic phosphate, the committed step in the de novo pyrimidine nucleotide biosynthesis pathway. In Bacillus cereus (strain G9842), this protein is Aspartate carbamoyltransferase catalytic subunit.